The sequence spans 180 residues: Protein C2-DOMAIN ABA-RELATED 10 (180 aa).

The C2 domain occupies 1 to 105 (MDQKPLGLLT…EALKMGMELL (105 aa)). Ca(2+) is bound by residues R22, D23, D28, D74, W75, D76, and D82.

This sequence belongs to the plant CAR protein family. In terms of assembly, binds to PYR/PYL/RCAR abscisic acid intracellular receptors in an ABA-independent manner, both at the plasma membrane and in the nucleus.

It localises to the cell membrane. Its subcellular location is the nucleus. Its function is as follows. Stimulates the GTPase/ATPase activities of Obg-like ATPases. Mediates the transient calcium-dependent interaction of PYR/PYL/RCAR abscisic acid (ABA) receptors with the plasma membrane and thus regulates ABA sensitivity. The chain is Protein C2-DOMAIN ABA-RELATED 10 from Arabidopsis thaliana (Mouse-ear cress).